Reading from the N-terminus, the 292-residue chain is Nucleotide-binding protein AZOSEA20610 (292 aa).

Position 8-15 (8-15) interacts with ATP; that stretch reads GLSGSGKS. 57-60 lines the GTP pocket; the sequence is DVRS.

It belongs to the RapZ-like family.

In terms of biological role, displays ATPase and GTPase activities. The sequence is that of Nucleotide-binding protein AZOSEA20610 from Aromatoleum aromaticum (strain DSM 19018 / LMG 30748 / EbN1) (Azoarcus sp. (strain EbN1)).